A 370-amino-acid chain; its full sequence is 3-isopropylmalate dehydrogenase (370 aa).

Position 77–90 (77–90) interacts with NAD(+); the sequence is GPKWDAVPYDARPE. Arginine 97, arginine 107, arginine 135, and aspartate 226 together coordinate substrate. Residues aspartate 226, aspartate 250, and aspartate 254 each contribute to the Mg(2+) site. 290–302 serves as a coordination point for NAD(+); it reads GSAPDIAGKGLAN.

It belongs to the isocitrate and isopropylmalate dehydrogenases family. LeuB type 1 subfamily. Homodimer. Mg(2+) serves as cofactor. Requires Mn(2+) as cofactor.

The protein resides in the cytoplasm. The catalysed reaction is (2R,3S)-3-isopropylmalate + NAD(+) = 4-methyl-2-oxopentanoate + CO2 + NADH. Its pathway is amino-acid biosynthesis; L-leucine biosynthesis; L-leucine from 3-methyl-2-oxobutanoate: step 3/4. In terms of biological role, catalyzes the oxidation of 3-carboxy-2-hydroxy-4-methylpentanoate (3-isopropylmalate) to 3-carboxy-4-methyl-2-oxopentanoate. The product decarboxylates to 4-methyl-2 oxopentanoate. The chain is 3-isopropylmalate dehydrogenase from Rhodopseudomonas palustris (strain HaA2).